A 437-amino-acid polypeptide reads, in one-letter code: Glucose-1-phosphate adenylyltransferase (437 aa).

Residues tyrosine 113, glycine 179, 194-195 (EK), and serine 212 contribute to the alpha-D-glucose 1-phosphate site.

Belongs to the bacterial/plant glucose-1-phosphate adenylyltransferase family. In terms of assembly, homotetramer.

It catalyses the reaction alpha-D-glucose 1-phosphate + ATP + H(+) = ADP-alpha-D-glucose + diphosphate. It functions in the pathway glycan biosynthesis; glycogen biosynthesis. Its function is as follows. Involved in the biosynthesis of ADP-glucose, a building block required for the elongation reactions to produce glycogen. Catalyzes the reaction between ATP and alpha-D-glucose 1-phosphate (G1P) to produce pyrophosphate and ADP-Glc. This is Glucose-1-phosphate adenylyltransferase from Haemophilus influenzae (strain ATCC 51907 / DSM 11121 / KW20 / Rd).